Reading from the N-terminus, the 175-residue chain is uncharacterized protein (175 aa).

A coiled-coil region spans residues 107–138 (KTEEEAEKTLQEIERKIFKKLWENLDKERKRE).

This is an uncharacterized protein from Aquifex aeolicus (strain VF5).